The chain runs to 425 residues: Histidine--tRNA ligase 1 (425 aa).

Belongs to the class-II aminoacyl-tRNA synthetase family. Homodimer.

It localises to the cytoplasm. It carries out the reaction tRNA(His) + L-histidine + ATP = L-histidyl-tRNA(His) + AMP + diphosphate + H(+). The polypeptide is Histidine--tRNA ligase 1 (Bacillus cereus (strain ZK / E33L)).